The following is a 444-amino-acid chain: Maltoporin (444 aa).

Positions 1–24 are cleaved as a signal peptide; it reads MITLRKVPLALAIAAGILSAQAGA.

This sequence belongs to the porin LamB (TC 1.B.3) family. Homotrimer formed of three 18-stranded antiparallel beta-barrels, containing three independent channels.

The protein localises to the cell outer membrane. The enzyme catalyses beta-maltose(in) = beta-maltose(out). Functionally, involved in the transport of maltose and maltodextrins. The protein is Maltoporin of Enterobacter sp. (strain 638).